A 662-amino-acid polypeptide reads, in one-letter code: PsbB mRNA maturation factor Mbb1, chloroplastic (662 aa).

The transit peptide at 1–50 directs the protein to the chloroplast; sequence MSLVPFSQLWRGVRTRGPVEQASSSSSSSSSSRRTWYAPARSQTGVQVAA. Disordered regions lie at residues 14 to 38 and 75 to 101; these read RTRG…TWYA and IIAD…RDEA. Low complexity predominate over residues 23 to 32; that stretch reads SSSSSSSSSS. The segment covering 88–101 has biased composition (basic and acidic residues); the sequence is EGERGDATGSRDEA. TPR repeat units follow at residues 126-160, 161-194, 196-229, 231-263, 269-302, 305-338, 339-372, 373-406, 408-440, and 444-477; these read SRIR…DPAD, PRAY…TGNV, PYIW…DGTH, CAWH…CRRK, AYLY…AEGA, VALW…NPRS, RYVH…NPTD, PALY…DPSD, YMWQ…DPRS, and VYVF…DPKS. 2 disordered regions span residues 540–563 and 598–662; these read SDGN…EAAA and LPDF…RSMG.

As to quaternary structure, part of a 300 kDa complex that associates with RNA.

The protein localises to the plastid. Its subcellular location is the chloroplast stroma. Involved, directly or indirectly, in the processing of the chloroplast encoded psbB mRNA to its mature form, acting via the 5'-UTR of the psbB mRNA. In Chlamydomonas reinhardtii (Chlamydomonas smithii), this protein is PsbB mRNA maturation factor Mbb1, chloroplastic (MBB1).